The following is a 593-amino-acid chain: Pyruvate kinase isozyme A, chloroplastic (593 aa).

The disordered stretch occupies residues 57–94 (DEPQSSPVLVSENGSGGVLSSATQEYGRNAAPGTDSSS). Residue Arg144 coordinates substrate. K(+) is bound by residues Asn146, Asp178, and Thr179. 146 to 149 (NMCH) contacts ATP. A Mg(2+)-binding site is contributed by Glu343. Positions 366, 367, and 399 each coordinate substrate. Mg(2+) is bound at residue Asp367.

The protein belongs to the pyruvate kinase family. Requires Mg(2+) as cofactor. It depends on K(+) as a cofactor. Highest levels in roots. Also found in stems, leaves and flowers.

It localises to the plastid. Its subcellular location is the chloroplast. It carries out the reaction pyruvate + ATP = phosphoenolpyruvate + ADP + H(+). The protein operates within carbohydrate degradation; glycolysis; pyruvate from D-glyceraldehyde 3-phosphate: step 5/5. This Nicotiana tabacum (Common tobacco) protein is Pyruvate kinase isozyme A, chloroplastic.